We begin with the raw amino-acid sequence, 54 residues long: LPSQHLCGSHLVEALYFVCGPKGFYYLPKBZVGIVEHCCHNTCSLYDLEGYCNQ.

Cystine bridges form between Cys-7-Cys-39, Cys-19-Cys-52, and Cys-38-Cys-43.

It belongs to the insulin family. In terms of assembly, heterodimer of a B chain and an A chain linked by two disulfide bonds.

The protein resides in the secreted. Functionally, insulin decreases blood glucose concentration. It increases cell permeability to monosaccharides, amino acids and fatty acids. It accelerates glycolysis, the pentose phosphate cycle, and glycogen synthesis in liver. This is Insulin (ins) from Squalus acanthias (Spiny dogfish).